A 402-amino-acid chain; its full sequence is 1-deoxy-D-xylulose 5-phosphate reductoisomerase (402 aa).

NADPH is bound by residues threonine 10, glycine 11, serine 12, isoleucine 13, glycine 36, arginine 37, asparagine 38, and asparagine 124. Residue lysine 125 participates in 1-deoxy-D-xylulose 5-phosphate binding. NADPH is bound at residue glutamate 126. Residue aspartate 150 participates in Mn(2+) binding. Residues serine 151, glutamate 152, serine 186, and histidine 209 each coordinate 1-deoxy-D-xylulose 5-phosphate. Glutamate 152 lines the Mn(2+) pocket. Glycine 215 serves as a coordination point for NADPH. 1-deoxy-D-xylulose 5-phosphate-binding residues include serine 222, asparagine 227, lysine 228, and glutamate 231. Glutamate 231 lines the Mn(2+) pocket.

It belongs to the DXR family. Requires Mg(2+) as cofactor. Mn(2+) is required as a cofactor.

It catalyses the reaction 2-C-methyl-D-erythritol 4-phosphate + NADP(+) = 1-deoxy-D-xylulose 5-phosphate + NADPH + H(+). It functions in the pathway isoprenoid biosynthesis; isopentenyl diphosphate biosynthesis via DXP pathway; isopentenyl diphosphate from 1-deoxy-D-xylulose 5-phosphate: step 1/6. Inhibited by fosmidomycin. In terms of biological role, catalyzes the NADPH-dependent rearrangement and reduction of 1-deoxy-D-xylulose-5-phosphate (DXP) to 2-C-methyl-D-erythritol 4-phosphate (MEP). The protein is 1-deoxy-D-xylulose 5-phosphate reductoisomerase of Synechococcus sp. (strain ATCC 27144 / PCC 6301 / SAUG 1402/1) (Anacystis nidulans).